Consider the following 192-residue polypeptide: Peptidyl-tRNA hydrolase (192 aa).

Position 18 (tyrosine 18) interacts with tRNA. Histidine 23 acts as the Proton acceptor in catalysis. The tRNA site is built by phenylalanine 69, asparagine 71, and asparagine 117.

The protein belongs to the PTH family. Monomer.

The protein resides in the cytoplasm. The enzyme catalyses an N-acyl-L-alpha-aminoacyl-tRNA + H2O = an N-acyl-L-amino acid + a tRNA + H(+). Hydrolyzes ribosome-free peptidyl-tRNAs (with 1 or more amino acids incorporated), which drop off the ribosome during protein synthesis, or as a result of ribosome stalling. Its function is as follows. Catalyzes the release of premature peptidyl moieties from peptidyl-tRNA molecules trapped in stalled 50S ribosomal subunits, and thus maintains levels of free tRNAs and 50S ribosomes. The sequence is that of Peptidyl-tRNA hydrolase from Neisseria meningitidis serogroup C (strain 053442).